The primary structure comprises 185 residues: Large ribosomal subunit protein uL5 (185 aa).

It belongs to the universal ribosomal protein uL5 family. Part of the 50S ribosomal subunit; part of the 5S rRNA/L5/L18/L25 subcomplex. Contacts the 5S rRNA and the P site tRNA. Forms a bridge to the 30S subunit in the 70S ribosome.

Functionally, this is one of the proteins that bind and probably mediate the attachment of the 5S RNA into the large ribosomal subunit, where it forms part of the central protuberance. In the 70S ribosome it contacts protein S13 of the 30S subunit (bridge B1b), connecting the 2 subunits; this bridge is implicated in subunit movement. Contacts the P site tRNA; the 5S rRNA and some of its associated proteins might help stabilize positioning of ribosome-bound tRNAs. This chain is Large ribosomal subunit protein uL5, found in Parabacteroides distasonis (strain ATCC 8503 / DSM 20701 / CIP 104284 / JCM 5825 / NCTC 11152).